We begin with the raw amino-acid sequence, 378 residues long: MATDYYAVLGVRRDASQDEIKKAFRRLARELHPDVNPDPKTQERFKEINAAYEVLSDPQKKQVYDLGGDPLSQSGGGGAGGFGAGGFGNFSDIMDAFFGTASQRGPRSRTRRGQDAMIRVEIELDEAAFGTTKDIQVETAVVCTTCSGEGAAPGTSAQTCDMCRGRGEVSQVTRSFLGQVMTSRPCPQCQGFGTVVPTPCPECAGDGRVRSRRTLTVKIPAGVDNGTRIQLAGEGEVGPGGGPAGDLYVEIHELPHQTFQRRGDDLHCTVTIPMTAAALGTKVPLETLDGMEEVDIRPGTQSGQSIPLHGRGITHLRGGGRGDLIVHVEVTTPTKMDPEQERLLRELAKLRGEERPTGQFQPGQQGLFSRLKDAFNGR.

The region spanning 4–68 is the J domain; sequence DYYAVLGVRR…QKKQVYDLGG (65 aa). The segment at 130–212 adopts a CR-type zinc-finger fold; that stretch reads GTTKDIQVET…CAGDGRVRSR (83 aa). Zn(2+) contacts are provided by cysteine 143, cysteine 146, cysteine 160, cysteine 163, cysteine 186, cysteine 189, cysteine 200, and cysteine 203. CXXCXGXG motif repeat units lie at residues 143–150, 160–167, 186–193, and 200–207; these read CTTCSGEG, CDMCRGRG, CPQCQGFG, and CPECAGDG. Residues 351 to 378 are disordered; sequence RGEERPTGQFQPGQQGLFSRLKDAFNGR. Residues 358–367 show a composition bias toward polar residues; the sequence is GQFQPGQQGL.

It belongs to the DnaJ family. As to quaternary structure, homodimer. Zn(2+) serves as cofactor.

The protein resides in the cytoplasm. Participates actively in the response to hyperosmotic and heat shock by preventing the aggregation of stress-denatured proteins and by disaggregating proteins, also in an autonomous, DnaK-independent fashion. Unfolded proteins bind initially to DnaJ; upon interaction with the DnaJ-bound protein, DnaK hydrolyzes its bound ATP, resulting in the formation of a stable complex. GrpE releases ADP from DnaK; ATP binding to DnaK triggers the release of the substrate protein, thus completing the reaction cycle. Several rounds of ATP-dependent interactions between DnaJ, DnaK and GrpE are required for fully efficient folding. Also involved, together with DnaK and GrpE, in the DNA replication of plasmids through activation of initiation proteins. The sequence is that of Chaperone protein DnaJ 2 from Streptomyces avermitilis (strain ATCC 31267 / DSM 46492 / JCM 5070 / NBRC 14893 / NCIMB 12804 / NRRL 8165 / MA-4680).